A 423-amino-acid polypeptide reads, in one-letter code: Serine/threonine-protein kinase ppk25 (423 aa).

2 positions are modified to phosphoserine: Ser-36 and Ser-38. Residues 53 to 305 enclose the Protein kinase domain; the sequence is WIIKKTIGAG…LEQAAKFPWL (253 aa). ATP-binding positions include 59 to 67 and Lys-82; that span reads IGAGSMGKV. The Proton acceptor role is filled by Asp-175.

This sequence belongs to the protein kinase superfamily. Ser/Thr protein kinase family.

It is found in the cytoplasm. It catalyses the reaction L-seryl-[protein] + ATP = O-phospho-L-seryl-[protein] + ADP + H(+). The catalysed reaction is L-threonyl-[protein] + ATP = O-phospho-L-threonyl-[protein] + ADP + H(+). In Schizosaccharomyces pombe (strain 972 / ATCC 24843) (Fission yeast), this protein is Serine/threonine-protein kinase ppk25 (ppk25).